The primary structure comprises 91 residues: Large ribosomal subunit protein eL43 (91 aa).

The segment at 38–59 (CNFCGKDSLKRKAAGIWECKAC) adopts a C4-type zinc-finger fold.

Belongs to the eukaryotic ribosomal protein eL43 family.

In Schistosoma mansoni (Blood fluke), this protein is Large ribosomal subunit protein eL43.